A 670-amino-acid chain; its full sequence is Soluble lamin-associated protein of 75 kDa (670 aa).

Disordered stretches follow at residues 273-301 (PKRP…SSEM) and 314-670 (STSE…AKLT). At S350 the chain carries Phosphoserine. Positions 358–375 (SQTSLTASINKLESTARP) are enriched in polar residues. A compositionally biased stretch (acidic residues) spans 378-387 (SSEEFLEEEP). A Phosphoserine modification is found at S379. A compositionally biased stretch (basic and acidic residues) spans 414-423 (EKQDGEKESE). The segment covering 442 to 453 (TEEEDSTSEVLD) has biased composition (acidic residues). Phosphoserine is present on S449. A compositionally biased stretch (polar residues) spans 460 to 470 (PFNSSEDSTNL). Composition is skewed to basic and acidic residues over residues 479 to 494 (KPPE…RIPD) and 504 to 514 (SDEKGHMEEKL). The residue at position 515 (S515) is a Phosphoserine. Polar residues-rich tracts occupy residues 558 to 569 (ENLSPNTTSSLE) and 579 to 591 (PQET…QSSL). 3 positions are modified to phosphoserine: S615, S618, and S635. Residues 651–670 (NLRRKAKGHKGPAKKKAKLT) show a composition bias toward basic residues.

This sequence belongs to the FAM169 family.

The protein resides in the nucleus envelope. It is found in the nucleus inner membrane. This is Soluble lamin-associated protein of 75 kDa (FAM169A) from Homo sapiens (Human).